The sequence spans 225 residues: Superantigen-like protein 11 (225 aa).

Residues methionine 1–alanine 30 form the signal peptide. Positions valine 94 to tyrosine 196 are sialyl Lewis X-binding.

This sequence belongs to the staphylococcal/streptococcal toxin family. As to quaternary structure, homodimer (via its C-terminal domain). Interacts with host FCAR and SELPLG (via sialyl Lewis X).

Its subcellular location is the secreted. In terms of biological role, secreted protein that plays a role in the inhibition of host immune system. Targets myeloid cells such as monocytes or granulocytes through binding with sialyllactosamine-containing glycoproteins. Prevents initial rolling of neutrophils toward the site of infection by interacting with host SELPLG. Disrupts neutrophil motility by induction of cell adhesion via interacting with glycans but independently of SELPLG. This chain is Superantigen-like protein 11, found in Staphylococcus aureus (strain Newman).